An 831-amino-acid polypeptide reads, in one-letter code: Replication restart protein PriA (831 aa).

Residues 304 to 471 (VLPLQGYHQV…HRHQNDPQRH (168 aa)) enclose the Helicase ATP-binding domain. 317–324 (GVTGSGKT) lines the ATP pocket. Residues 413-416 (DEEH) carry the DEAH box motif. The Zn(2+) site is built by C537, C540, C546, C549, C568, C571, C581, and C584. The Helicase C-terminal domain maps to 575-735 (EIQPKVCPEC…ELPQREMLNY (161 aa)).

It belongs to the helicase family. PriA subfamily. In terms of assembly, component of the replication restart primosome. Zn(2+) serves as cofactor.

The enzyme catalyses Couples ATP hydrolysis with the unwinding of duplex DNA by translocating in the 3'-5' direction.. The catalysed reaction is ATP + H2O = ADP + phosphate + H(+). Initiates the restart of stalled replication forks, which reloads the replicative helicase on sites other than the origin of replication. Recognizes and binds to abandoned replication forks and remodels them to uncover a helicase loading site. Promotes assembly of the primosome at these replication forks. The sequence is that of Replication restart protein PriA from Synechocystis sp. (strain ATCC 27184 / PCC 6803 / Kazusa).